A 1278-amino-acid polypeptide reads, in one-letter code: Alpha-glucan water dikinase 2 (1278 aa).

The first 23 residues, 1-23 (MATSKSQQFQLIEGMELQITVTG), serve as a signal peptide directing secretion. Catalysis depends on H886, which acts as the Tele-phosphohistidine intermediate.

It belongs to the PEP-utilizing enzyme family. In terms of assembly, homodimer. Requires Mg(2+) as cofactor.

It carries out the reaction [(1-&gt;4)-alpha-D-glucosyl](n) + n ATP + n H2O = [(1-&gt;4)-6-phospho-alpha-D-glucosyl](n) + n AMP + n phosphate + 2n H(+). In terms of biological role, mediates the incorporation of phosphate into alpha-glucan, mostly at the C-6 position of glucose units. The sequence is that of Alpha-glucan water dikinase 2 (GWD2) from Arabidopsis thaliana (Mouse-ear cress).